The chain runs to 205 residues: Small ribosomal subunit protein uS4 (205 aa).

One can recognise an S4 RNA-binding domain in the interval 93 to 171; sequence SRVSSVLYRS…SPHYLEVDRE (79 aa).

It belongs to the universal ribosomal protein uS4 family. As to quaternary structure, part of the 30S ribosomal subunit. Contacts protein S5. The interaction surface between S4 and S5 is involved in control of translational fidelity.

Its function is as follows. One of the primary rRNA binding proteins, it binds directly to 16S rRNA where it nucleates assembly of the body of the 30S subunit. With S5 and S12 plays an important role in translational accuracy. The protein is Small ribosomal subunit protein uS4 of Neorickettsia sennetsu (strain ATCC VR-367 / Miyayama) (Ehrlichia sennetsu).